The primary structure comprises 92 residues: UPF0237 protein MM_0082 (92 aa).

In terms of domain architecture, ACT spans 7-81 (IITVIGSDRV…KSLGVEVKVQ (75 aa)).

Belongs to the UPF0237 family.

The polypeptide is UPF0237 protein MM_0082 (Methanosarcina mazei (strain ATCC BAA-159 / DSM 3647 / Goe1 / Go1 / JCM 11833 / OCM 88) (Methanosarcina frisia)).